We begin with the raw amino-acid sequence, 158 residues long: Lipoprotein signal peptidase (158 aa).

Transmembrane regions (helical) follow at residues 7 to 27 (LFWIAAFIAFFVDQLTKYWVV), 38 to 58 (ILPGIFHFTYVTNTGAAFSLF), 67 to 87 (WLSLGVSLLLIGLALLGPVLE), and 95 to 115 (GLILGGAMGNGIDRFALGYVV). Residues D116 and D132 contribute to the active site. Residues 125–145 (FAVFNMADSFISIGIVCLLLA) traverse the membrane as a helical segment.

It belongs to the peptidase A8 family.

It is found in the cell inner membrane. It carries out the reaction Release of signal peptides from bacterial membrane prolipoproteins. Hydrolyzes -Xaa-Yaa-Zaa-|-(S,diacylglyceryl)Cys-, in which Xaa is hydrophobic (preferably Leu), and Yaa (Ala or Ser) and Zaa (Gly or Ala) have small, neutral side chains.. The protein operates within protein modification; lipoprotein biosynthesis (signal peptide cleavage). Its function is as follows. This protein specifically catalyzes the removal of signal peptides from prolipoproteins. This Trichormus variabilis (strain ATCC 29413 / PCC 7937) (Anabaena variabilis) protein is Lipoprotein signal peptidase.